The chain runs to 469 residues: Glutamine synthetase (469 aa).

A GS beta-grasp domain is found at 15 to 96 (EDVKFVDVRF…INFFIHDPIT (82 aa)). A GS catalytic domain is found at 104-469 (PRNVAKKAEA…PHEFEMYFDV (366 aa)). Residues Glu129 and Glu131 each contribute to the Mg(2+) site. Glu205 contacts ATP. Residues Glu210 and Glu218 each coordinate Mg(2+). 221–223 (YKF) contacts ATP. L-glutamate-binding positions include 262–263 (NG) and Gly263. His267 serves as a coordination point for Mg(2+). ATP contacts are provided by residues 269 to 271 (HQS) and Ser271. Arg320, Glu326, and Arg338 together coordinate L-glutamate. Residues Arg338, Arg343, and Lys352 each coordinate ATP. Glu357 provides a ligand contact to Mg(2+). Position 359 (Arg359) interacts with L-glutamate. O-AMP-tyrosine is present on Tyr397.

The protein belongs to the glutamine synthetase family. Oligomer of 12 subunits arranged in the form of two hexagons. Mg(2+) serves as cofactor.

Its subcellular location is the cytoplasm. The catalysed reaction is L-glutamate + NH4(+) + ATP = L-glutamine + ADP + phosphate + H(+). With respect to regulation, the activity of this enzyme could be controlled by adenylation under conditions of abundant glutamine. Functionally, catalyzes the ATP-dependent biosynthesis of glutamine from glutamate and ammonia. Complements L-glutamine auxotrophy of an E.coli glnA mutant. The chain is Glutamine synthetase from Streptomyces coelicolor (strain ATCC BAA-471 / A3(2) / M145).